We begin with the raw amino-acid sequence, 546 residues long: CTP synthase (546 aa).

The amidoligase domain stretch occupies residues 1–266 (MTTNYIFVTG…DELVCKRFGI (266 aa)). Residue S14 coordinates CTP. S14 contacts UTP. Residues 15–20 (SLGKGI) and D72 each bind ATP. D72 and E140 together coordinate Mg(2+). Residues 147–149 (DIE), 187–192 (KTKPTQ), and K223 contribute to the CTP site. Residues 187–192 (KTKPTQ) and K223 each bind UTP. 239 to 241 (RDV) is an ATP binding site. Residues 291-542 (TIGMVGKYIE…VKAAGEFQRG (252 aa)) form the Glutamine amidotransferase type-1 domain. G352 lines the L-glutamine pocket. The Nucleophile; for glutamine hydrolysis role is filled by C379. L-glutamine contacts are provided by residues 380 to 383 (LGMQ), E403, and R470. Catalysis depends on residues H515 and E517.

Belongs to the CTP synthase family. Homotetramer.

It carries out the reaction UTP + L-glutamine + ATP + H2O = CTP + L-glutamate + ADP + phosphate + 2 H(+). It catalyses the reaction L-glutamine + H2O = L-glutamate + NH4(+). The enzyme catalyses UTP + NH4(+) + ATP = CTP + ADP + phosphate + 2 H(+). It functions in the pathway pyrimidine metabolism; CTP biosynthesis via de novo pathway; CTP from UDP: step 2/2. Allosterically activated by GTP, when glutamine is the substrate; GTP has no effect on the reaction when ammonia is the substrate. The allosteric effector GTP functions by stabilizing the protein conformation that binds the tetrahedral intermediate(s) formed during glutamine hydrolysis. Inhibited by the product CTP, via allosteric rather than competitive inhibition. Functionally, catalyzes the ATP-dependent amination of UTP to CTP with either L-glutamine or ammonia as the source of nitrogen. Regulates intracellular CTP levels through interactions with the four ribonucleotide triphosphates. This is CTP synthase from Vibrio atlanticus (strain LGP32) (Vibrio splendidus (strain Mel32)).